A 382-amino-acid polypeptide reads, in one-letter code: POU domain, class 3, transcription factor 2-A (382 aa).

3 disordered regions span residues 69–136 (PWAT…SSNG), 150–206 (GMIN…TPTS), and 348–382 (EKRM…TSVQ). Residues 122–136 (STGSTHLSSMASSNG) are compositionally biased toward polar residues. Positions 165–178 (LRDSHDDHHGDHGH) are enriched in basic and acidic residues. Residues 179–194 (QQVSQAQQQHSQLQGG) are compositionally biased toward low complexity. A POU-specific domain is found at 201–275 (EDTPTSDDLE…LLNKWLEEAD (75 aa)). A DNA-binding region (homeobox) is located at residues 293 to 352 (KRKKRTSIEVSVKGALESHFLKCPKPSAPEITSLADSLQLEKEVVRVWFCNRRQKEKRMT).

Belongs to the POU transcription factor family. Class-3 subfamily. Expressed in the developing brain and spinal cord. Also found in a restricted region of the auditory vesicle during development. In the adult, expression is restricted to the brain.

Its subcellular location is the nucleus. Its function is as follows. Transcription factor that may be implicated in patterning of the central nervous system during early development. In Xenopus laevis (African clawed frog), this protein is POU domain, class 3, transcription factor 2-A (pou3f2-a).